The chain runs to 344 residues: Phenylalanine--tRNA ligase alpha subunit (344 aa).

E256 provides a ligand contact to Mg(2+).

It belongs to the class-II aminoacyl-tRNA synthetase family. Phe-tRNA synthetase alpha subunit type 1 subfamily. As to quaternary structure, tetramer of two alpha and two beta subunits. It depends on Mg(2+) as a cofactor.

Its subcellular location is the cytoplasm. It carries out the reaction tRNA(Phe) + L-phenylalanine + ATP = L-phenylalanyl-tRNA(Phe) + AMP + diphosphate + H(+). This chain is Phenylalanine--tRNA ligase alpha subunit, found in Geobacillus kaustophilus (strain HTA426).